The sequence spans 332 residues: Ketol-acid reductoisomerase (NAD(+)) (332 aa).

In terms of domain architecture, KARI N-terminal Rossmann spans 1–181 (MKIYYDQDAD…GATRAGVIQT (181 aa)). Residues 24–27 (YGSQ), serine 50, and 82–85 (DEKQ) each bind NAD(+). The active site involves histidine 107. NAD(+) is bound at residue glycine 133. Residues 182–327 (TFKEETETDL…ARLRGMMPWL (146 aa)) form the KARI C-terminal knotted domain. Mg(2+) is bound by residues aspartate 190, glutamate 194, glutamate 226, and glutamate 230. Substrate is bound at residue serine 251.

Belongs to the ketol-acid reductoisomerase family. The cofactor is Mg(2+).

The catalysed reaction is (2R)-2,3-dihydroxy-3-methylbutanoate + NAD(+) = (2S)-2-acetolactate + NADH + H(+). Its pathway is amino-acid biosynthesis; L-isoleucine biosynthesis; L-isoleucine from 2-oxobutanoate: step 2/4. The protein operates within amino-acid biosynthesis; L-valine biosynthesis; L-valine from pyruvate: step 2/4. Involved in the biosynthesis of branched-chain amino acids (BCAA). Catalyzes an alkyl-migration followed by a ketol-acid reduction of (S)-2-acetolactate (S2AL) to yield (R)-2,3-dihydroxy-isovalerate. In the isomerase reaction, S2AL is rearranged via a Mg-dependent methyl migration to produce 3-hydroxy-3-methyl-2-ketobutyrate (HMKB). In the reductase reaction, this 2-ketoacid undergoes a metal-dependent reduction by NADH to yield (R)-2,3-dihydroxy-isovalerate. The protein is Ketol-acid reductoisomerase (NAD(+)) of Thermacetogenium phaeum (strain ATCC BAA-254 / DSM 26808 / PB).